Consider the following 400-residue polypeptide: MRSKFMSSPTLSDLGKREATAAAALDERGTQQKRAGANATWNSIQNGVISVFQKKGLADHELYSLNEGVRQLLKTELGSFFTEYLQNQLLTKGMVILRDKIRFYEGQKLLDSLAETWDFFFSDILPMLQAIFYPVQGKEPSIRQLALLHFRNIITLNLKLDDALSRPRARVPPSIIQMLLILQGVHESKGVTEEYMNLESLIQKVVSPYLGTYGLYSNEAPFCHSSCILEKRMFRRCPKSGEILTKNPVVRSKSYNNPLLTPVAEYEMENLVANGSGIRRHSVSEMTSVLELPMGYSNLTTDSTSKLSMAGTKPPGEGERPPISNGQFPPLHNLSDSQQGLYNSQRDSPLLPAPSSSPETIVDQILESIDSDSEGIFIDFGRGCSKSPEFSMEIGRQSLV.

Positions 301–358 are disordered; it reads TDSTSKLSMAGTKPPGEGERPPISNGQFPPLHNLSDSQQGLYNSQRDSPLLPAPSSSP. Polar residues predominate over residues 334-347; sequence LSDSQQGLYNSQRD. Residues 348–358 show a composition bias toward low complexity; that stretch reads SPLLPAPSSSP.

This sequence belongs to the PROTOR family. As to quaternary structure, associated component of the mechanistic target of rapamycin complex 2 (mTORC2).

In terms of biological role, associated subunit of mTORC2, which regulates cell growth and survival in response to hormonal signals. This Xenopus laevis (African clawed frog) protein is Proline-rich protein 5 (prr5).